The primary structure comprises 160 residues: Transcription antitermination protein NusB (160 aa).

This sequence belongs to the NusB family.

Its function is as follows. Involved in transcription antitermination. Required for transcription of ribosomal RNA (rRNA) genes. Binds specifically to the boxA antiterminator sequence of the ribosomal RNA (rrn) operons. This chain is Transcription antitermination protein NusB, found in Rhizobium etli (strain ATCC 51251 / DSM 11541 / JCM 21823 / NBRC 15573 / CFN 42).